Consider the following 110-residue polypeptide: UPF0122 protein SaurJH9_1295 (110 aa).

The protein belongs to the UPF0122 family.

Might take part in the signal recognition particle (SRP) pathway. This is inferred from the conservation of its genetic proximity to ftsY/ffh. May be a regulatory protein. This chain is UPF0122 protein SaurJH9_1295, found in Staphylococcus aureus (strain JH9).